The sequence spans 260 residues: Coiled-coil domain-containing protein 172 (260 aa).

Residues 13-194 (SEHQAEESRR…FEDKKHEAIC (182 aa)) are a coiled coil.

This sequence belongs to the CCDC172 family. In terms of assembly, may interact with TEKT2.

Its subcellular location is the cytoplasm. The protein resides in the cell projection. It is found in the cilium. The sequence is that of Coiled-coil domain-containing protein 172 (CCDC172) from Bos taurus (Bovine).